The primary structure comprises 234 residues: Sugar fermentation stimulation protein A (234 aa).

A DNA-binding region (H-T-H motif) is located at residues 201–220 (LLSEAQNKGVEVLAYKAELS).

The protein belongs to the SfsA family.

In terms of biological role, binds to DNA non-specifically. Could be a regulatory factor involved in maltose metabolism. This chain is Sugar fermentation stimulation protein A, found in Salmonella gallinarum (strain 287/91 / NCTC 13346).